A 300-amino-acid chain; its full sequence is GTPase Era (300 aa).

In terms of domain architecture, Era-type G spans 8 to 176 (RCGYVAIVGR…EAQIAKHLPE (169 aa)). The interval 16 to 23 (GRPNVGKS) is G1. 16 to 23 (GRPNVGKS) contacts GTP. A G2 region spans residues 42–46 (QTTRH). Residues 63–66 (DTPG) are G3. Residues 63 to 67 (DTPGM) and 125 to 128 (NKTD) each bind GTP. Residues 125-128 (NKTD) form a G4 region. Residues 155-157 (ISA) are G5. Residues 199–283 (VREKIMRQLG…MLNLWVKVKG (85 aa)) enclose the KH type-2 domain.

The protein belongs to the TRAFAC class TrmE-Era-EngA-EngB-Septin-like GTPase superfamily. Era GTPase family. Monomer.

It localises to the cytoplasm. The protein resides in the cell inner membrane. Functionally, an essential GTPase that binds both GDP and GTP, with rapid nucleotide exchange. Plays a role in 16S rRNA processing and 30S ribosomal subunit biogenesis and possibly also in cell cycle regulation and energy metabolism. The sequence is that of GTPase Era from Pseudomonas putida (strain ATCC 700007 / DSM 6899 / JCM 31910 / BCRC 17059 / LMG 24140 / F1).